A 464-amino-acid chain; its full sequence is NADH dehydrogenase [ubiquinone] flavoprotein 1, mitochondrial (464 aa).

A mitochondrion-targeting transit peptide spans 1-20; that stretch reads MLATRRLLGWSLPARVSVRF. Lysine 81 is subject to N6-acetyllysine; alternate. At lysine 81 the chain carries N6-succinyllysine; alternate. 87-96 serves as a coordination point for NADH; sequence GRGGAGFPTG. N6-acetyllysine is present on lysine 104. 199–247 serves as a coordination point for FMN; sequence RGAGAYICGEETALIESIEGKQGKPRLKPPFPADVGVFGCPTTVANVET. Arginine 257 bears the Omega-N-methylarginine mark. Lysine 375 carries the N6-acetyllysine modification. Residues cysteine 379, cysteine 382, cysteine 385, and cysteine 425 each coordinate [4Fe-4S] cluster.

It belongs to the complex I 51 kDa subunit family. In terms of assembly, core subunit of respiratory chain NADH dehydrogenase (Complex I) which is composed of 45 different subunits. This is a component of the flavoprotein-sulfur (FP) fragment of the enzyme. Interacts with RAB5IF. It depends on FMN as a cofactor. Requires [4Fe-4S] cluster as cofactor.

It localises to the mitochondrion inner membrane. The catalysed reaction is a ubiquinone + NADH + 5 H(+)(in) = a ubiquinol + NAD(+) + 4 H(+)(out). In terms of biological role, core subunit of the mitochondrial membrane respiratory chain NADH dehydrogenase (Complex I) which catalyzes electron transfer from NADH through the respiratory chain, using ubiquinone as an electron acceptor. Part of the peripheral arm of the enzyme, where the electrons from NADH are accepted by flavin mononucleotide (FMN) and then passed along a chain of iron-sulfur clusters by electron tunnelling to the final acceptor ubiquinone. Contains FMN, which is the initial electron acceptor as well as one iron-sulfur cluster. The polypeptide is NADH dehydrogenase [ubiquinone] flavoprotein 1, mitochondrial (Homo sapiens (Human)).